A 190-amino-acid chain; its full sequence is Negative regulator YfiR (190 aa).

Arginine 60 is a GMP binding site. Cystine bridges form between cysteine 71–cysteine 110 and cysteine 145–cysteine 152. GMP-binding residues include arginine 175 and histidine 177.

As to quaternary structure, homodimer. Interacts with TpbB/YfiN. Interacts with YfiB. The YfiB-YfiR complex is a 2:2 heterotetramer. Cys-71 and Cys-110 form a disulfide bond in the oxidized form but maintain their free form in the non-oxidized YfiR structure. The Cys-145-Cys-152 disulfide bond is well formed in both structures. The Cys145-Cys152 disulfide bond, but not Cys-71-Cys-110, plays an important role in maintaining the correct folding of the protein.

The protein localises to the periplasm. TpbB/YfiN repression is released through an YfiB-dependent sequestration of YfiR to the outer membrane. Binds vitamin B6 (VB6) or L-Trp at the periphery of the dimer, and both VB6 and L-Trp are able to reduce biofilm formation induced by YfiB L43P mutant. However, VB6 or L-Trp alone may have little effects in interrupting the YfiB-YfiR interaction. GMP enhances the binding affinity between YfiB and YfiR. Negatively regulates the activity of the diguanylate cyclase TpbB/YfiN, leading to decreased c-di-GMP production. Inhibits TpbB/YfiN allosterically, through a hydrophobic interaction between the C-terminus of YfiR and a conserved region of the periplasmic PAS domain of TpbB/YfiN. Under reducing conditions, may also act as an YfiB-independent sensing device that is able to activate TpbB/YfiN in response to the redox status of the periplasm. Functionally, part of the YfiB-TpbB-YfiR (or yfiBNR) system, encoding a tripartite signaling module that modulates intracellular c-di-GMP levels. The system is a key regulator of the small colony variant (SCV) phenotype, and plays an important role in biofilm formation and in vivo persistence. The c-di-GMP produced by TpbB/YfiN stimulates the production of the Pel and Psl exopolysaccharides, which promotes surface attachment, generates an SCV phenotype and confers resistance against phagocytosis. This Pseudomonas aeruginosa (strain ATCC 15692 / DSM 22644 / CIP 104116 / JCM 14847 / LMG 12228 / 1C / PRS 101 / PAO1) protein is Negative regulator YfiR.